We begin with the raw amino-acid sequence, 207 residues long: Large ribosomal subunit protein uL4 (207 aa).

The segment at 47-78 is disordered; the sequence is GTAKTKTRAEVRGGGKKPWRQKGTGRARQGSI. Positions 60-71 are enriched in basic residues; it reads GGKKPWRQKGTG.

Belongs to the universal ribosomal protein uL4 family. As to quaternary structure, part of the 50S ribosomal subunit.

Functionally, one of the primary rRNA binding proteins, this protein initially binds near the 5'-end of the 23S rRNA. It is important during the early stages of 50S assembly. It makes multiple contacts with different domains of the 23S rRNA in the assembled 50S subunit and ribosome. Forms part of the polypeptide exit tunnel. The polypeptide is Large ribosomal subunit protein uL4 (Acholeplasma laidlawii (strain PG-8A)).